The chain runs to 892 residues: Translation initiation factor IF-2 (892 aa).

The tract at residues 65–296 (KTRSTLNIPS…KGKRKPSTLQ (232 aa)) is disordered. The span at 68 to 82 (STLNIPSTGGKSKSV) shows a compositional bias: polar residues. A compositionally biased stretch (basic and acidic residues) spans 99-217 (EQAKAEEQAQ…KMAAENEGKW (119 aa)). Positions 224-237 (QTESADYHVTTSQH) are enriched in polar residues. Basic and acidic residues predominate over residues 239–254 (RAAEDENDAKVEGDRR). The span at 255-269 (SRTRGGKATKQKKGN) shows a compositional bias: basic residues. Positions 270-283 (KLSESKADREEARA) are enriched in basic and acidic residues. Positions 391-560 (HRAPVVTIMG…LLQAEVLELK (170 aa)) constitute a tr-type G domain. Positions 400 to 407 (GHVDHGKT) are G1. Residue 400 to 407 (GHVDHGKT) coordinates GTP. The tract at residues 425–429 (GITQH) is G2. Residues 446 to 449 (DTPG) form a G3 region. Residues 446–450 (DTPGH) and 500–503 (NKID) each bind GTP. Residues 500–503 (NKID) are G4. The tract at residues 536–538 (SAK) is G5.

It belongs to the TRAFAC class translation factor GTPase superfamily. Classic translation factor GTPase family. IF-2 subfamily.

The protein localises to the cytoplasm. In terms of biological role, one of the essential components for the initiation of protein synthesis. Protects formylmethionyl-tRNA from spontaneous hydrolysis and promotes its binding to the 30S ribosomal subunits. Also involved in the hydrolysis of GTP during the formation of the 70S ribosomal complex. This chain is Translation initiation factor IF-2, found in Yersinia pseudotuberculosis serotype O:1b (strain IP 31758).